The primary structure comprises 241 residues: Uracil-DNA glycosylase (241 aa).

D71 acts as the Proton acceptor in catalysis.

The protein belongs to the uracil-DNA glycosylase (UDG) superfamily. UNG family.

The protein localises to the cytoplasm. It carries out the reaction Hydrolyzes single-stranded DNA or mismatched double-stranded DNA and polynucleotides, releasing free uracil.. Excises uracil residues from the DNA which can arise as a result of misincorporation of dUMP residues by DNA polymerase or due to deamination of cytosine. The sequence is that of Uracil-DNA glycosylase from Xanthomonas axonopodis pv. citri (strain 306).